Consider the following 200-residue polypeptide: Pyridoxine/pyridoxamine 5'-phosphate oxidase (200 aa).

FMN is bound by residues 49-54 (RMLLLK), 64-65 (YT), R70, K71, and Q93. K54 contacts substrate. Positions 111, 115, and 119 each coordinate substrate. FMN is bound by residues 128–129 (QS) and W173. 179-181 (RLH) contributes to the substrate binding site. Position 183 (R183) interacts with FMN.

It belongs to the pyridoxamine 5'-phosphate oxidase family. In terms of assembly, homodimer. The cofactor is FMN.

It catalyses the reaction pyridoxamine 5'-phosphate + O2 + H2O = pyridoxal 5'-phosphate + H2O2 + NH4(+). The enzyme catalyses pyridoxine 5'-phosphate + O2 = pyridoxal 5'-phosphate + H2O2. Its pathway is cofactor metabolism; pyridoxal 5'-phosphate salvage; pyridoxal 5'-phosphate from pyridoxamine 5'-phosphate: step 1/1. It participates in cofactor metabolism; pyridoxal 5'-phosphate salvage; pyridoxal 5'-phosphate from pyridoxine 5'-phosphate: step 1/1. In terms of biological role, catalyzes the oxidation of either pyridoxine 5'-phosphate (PNP) or pyridoxamine 5'-phosphate (PMP) into pyridoxal 5'-phosphate (PLP). The sequence is that of Pyridoxine/pyridoxamine 5'-phosphate oxidase from Gluconobacter oxydans (strain 621H) (Gluconobacter suboxydans).